Reading from the N-terminus, the 574-residue chain is DNA polymerase alpha subunit B (574 aa).

It belongs to the DNA polymerase alpha subunit B family. As to quaternary structure, component of the alpha DNA polymerase complex (also known as the alpha DNA polymerase-primase complex) consisting of four subunits: the catalytic subunit pol1, the accessory subunit spb70/pol12, and the primase complex subunits spp1/pri1 and spp2/pri2 respectively. Interacts with orc1. Interacts with orc2; the interaction occurs on the chromatin, is stable thoughout the cell cycle and is independent from spb70 role in the alpha DNA polymerase complex. In terms of processing, phosphorylated in a cell cycle-dependent manner.

Its subcellular location is the nucleus. It localises to the chromosome. In terms of biological role, accessory subunit of the DNA polymerase alpha complex (also known as the alpha DNA polymerase-primase complex) which plays an essential role in the initiation of DNA synthesis. During the S phase of the cell cycle, the DNA polymerase alpha complex (composed of a catalytic subunit pol1, an accessory subunit spb70/pol12 and two primase subunits, the catalytic subunit spp1/pri1 and the regulatory subunit spp2/pri2) is recruited to DNA at the replicative forks. The primase subunit of the polymerase alpha complex initiates DNA synthesis by oligomerising short RNA primers on both leading and lagging strands. The chain is DNA polymerase alpha subunit B from Schizosaccharomyces pombe (strain 972 / ATCC 24843) (Fission yeast).